The following is a 393-amino-acid chain: NAD(P)H-quinone oxidoreductase subunit H, chloroplastic (393 aa).

The protein belongs to the complex I 49 kDa subunit family. In terms of assembly, NDH is composed of at least 16 different subunits, 5 of which are encoded in the nucleus.

It localises to the plastid. It is found in the chloroplast thylakoid membrane. It carries out the reaction a plastoquinone + NADH + (n+1) H(+)(in) = a plastoquinol + NAD(+) + n H(+)(out). It catalyses the reaction a plastoquinone + NADPH + (n+1) H(+)(in) = a plastoquinol + NADP(+) + n H(+)(out). Functionally, NDH shuttles electrons from NAD(P)H:plastoquinone, via FMN and iron-sulfur (Fe-S) centers, to quinones in the photosynthetic chain and possibly in a chloroplast respiratory chain. The immediate electron acceptor for the enzyme in this species is believed to be plastoquinone. Couples the redox reaction to proton translocation, and thus conserves the redox energy in a proton gradient. The chain is NAD(P)H-quinone oxidoreductase subunit H, chloroplastic from Phaseolus vulgaris (Kidney bean).